We begin with the raw amino-acid sequence, 350 residues long: 26S proteasome non-ATPase regulatory subunit 8 (350 aa).

Positions 1–24 (MFIKGRAPRAPPRERRRATRGGLR) are disordered. A Phosphoserine modification is found at serine 106. The PCI domain maps to 162–331 (PSFERYMAQL…QQKPEDTTIP (170 aa)). A Glycyl lysine isopeptide (Lys-Gly) (interchain with G-Cter in SUMO2) cross-link involves residue lysine 297.

Belongs to the proteasome subunit S14 family. In terms of assembly, component of the 19S proteasome regulatory particle complex. The 26S proteasome consists of a 20S core particle (CP) and two 19S regulatory subunits (RP). The regulatory particle is made of a lid composed of 9 subunits including PSMD8, a base containing 6 ATPases and few additional components. Interacts with DDI2. Interacts with TASOR.

Component of the 26S proteasome, a multiprotein complex involved in the ATP-dependent degradation of ubiquitinated proteins. This complex plays a key role in the maintenance of protein homeostasis by removing misfolded or damaged proteins, which could impair cellular functions, and by removing proteins whose functions are no longer required. Therefore, the proteasome participates in numerous cellular processes, including cell cycle progression, apoptosis, or DNA damage repair. The sequence is that of 26S proteasome non-ATPase regulatory subunit 8 (PSMD8) from Homo sapiens (Human).